The primary structure comprises 551 residues: MPTFDQALRKAGEFGRFQRRVFLLLCLTGVTFAFLFVGVVFLGSQPDYYWCRGPRATALAERCAWSPEEEWNLTTPELHVPAERRGQGHCHRYLLEATNTSSELSCDPLTAFPNRSAPLVSCSGDWRYVETHSTIVSQFDLVCSNAWMLDLTQAILNLGFLAGAFTLGYAADRYGRLIIYLISCFGVGITGVVVAFAPNFSVFVIFRFLQGVFGKGAWMTCFVIVTEIVGSKQRRIVGIVIQMFFTLGIIILPGIAYFTPSWQGIQLAISLPSFLFLLYYWVVPESPRWLITRKQGEKALQILRRVAKCNGKHLSSNYSEITVTDEEVSNPSCLDLVRTPQMRKCTLILMFAWFTSAVVYQGLVMRLGLIGGNLYIDFFISGLVELPGALLILLTIERLGRRLPFAASNIVAGVSCLVTAFLPEGIPWLRTTVATLGRLGITMAFEIVYLVNSELYPTTLRNFGVSLCSGLCDFGGIIAPFLLFRLAAIWLELPLIIFGILASVCGGLVMLLPETKGIALPETVEDVEKLGSSQLHQCGRKKKTQVSTSDV.

A helical transmembrane segment spans residues 21 to 41; it reads VFLLLCLTGVTFAFLFVGVVF. 3 N-linked (GlcNAc...) asparagine glycosylation sites follow: Asn72, Asn99, and Asn114. Residues 177–197 traverse the membrane as a helical segment; the sequence is LIIYLISCFGVGITGVVVAFA. An N-linked (GlcNAc...) asparagine glycan is attached at Asn199. The next 2 membrane-spanning stretches (helical) occupy residues 236 to 256 and 264 to 284; these read IVGI…PGIA and GIQL…WVVP. Residues 284–288 carry the Proline-rich sequence motif; it reads PESPR. Asn317 carries an N-linked (GlcNAc...) asparagine glycan. The next 3 membrane-spanning stretches (helical) occupy residues 376-396, 464-484, and 493-513; these read IDFF…LLTI, GVSL…FLLF, and LPLI…MLLP.

The protein belongs to the major facilitator (TC 2.A.1) superfamily. Organic cation transporter (TC 2.A.1.19) family. In terms of tissue distribution, highly expressed in placenta. Highly expressed in kidney cortex. In kidney, expressed specifically in the proximal and distal convoluted tubules and within Bowman capsule. Expressed in brain, particularly in dopaminergic neurons of the substantia nigra compacta, non-aminergic neurons of the ventral tegmental area, substantia nigra reticulata, locus coeruleus, hippocampus and cortex. In brain, also detected in astrocytes in the substantia nigra reticulata, several hypothalamic nuclei and nigrostriatal region. Expressed in neurons and glial cells of amygdala.

Its subcellular location is the cell membrane. The protein localises to the apical cell membrane. It localises to the basolateral cell membrane. The protein resides in the mitochondrion membrane. It is found in the endomembrane system. Its subcellular location is the nucleus membrane. The protein localises to the nucleus outer membrane. It carries out the reaction (R)-noradrenaline(out) = (R)-noradrenaline(in). It catalyses the reaction (R)-adrenaline(out) = (R)-adrenaline(in). The enzyme catalyses serotonin(out) = serotonin(in). The catalysed reaction is dopamine(out) = dopamine(in). It carries out the reaction histamine(out) = histamine(in). It catalyses the reaction tyramine(in) = tyramine(out). The enzyme catalyses guanidine(out) = guanidine(in). The catalysed reaction is agmatine(out) = agmatine(in). It carries out the reaction spermidine(in) = spermidine(out). It catalyses the reaction L-histidyl-L-proline diketopiperazine(in) = L-histidyl-L-proline diketopiperazine(out). The enzyme catalyses (R)-salsolinol(in) = (R)-salsolinol(out). Functionally, electrogenic voltage-dependent transporter that mediates the transport of a variety of organic cations such as endogenous bioactive amines, cationic drugs and xenobiotics. Cation cellular uptake or release is driven by the electrochemical potential, i.e. membrane potential and concentration gradient. Functions as a Na(+)- and Cl(-)-independent, bidirectional uniporter. Implicated in monoamine neurotransmitters uptake such as dopamine, adrenaline/epinephrine, noradrenaline/norepinephrine, homovanillic acid, histamine, serotonin and tyramine, thereby supporting a role in homeostatic regulation of aminergic neurotransmission in the brain. Transports dopaminergic neuromodulators cyclo(his-pro) and salsolinol with low efficiency. May be involved in the uptake and disposition of cationic compounds by renal clearance from the blood flow. May contribute to regulate the transport of cationic compounds in testis across the blood-testis-barrier. Mediates the transport of polyamine spermidine and putrescine. Mediates the bidirectional transport of polyamine agmatine. Also transports guanidine. May also mediate intracellular transport of organic cations, thereby playing a role in amine metabolism and intracellular signaling. The sequence is that of Solute carrier family 22 member 3 from Mus musculus (Mouse).